A 248-amino-acid polypeptide reads, in one-letter code: Gas vesicle protein J (248 aa).

The 1; truncated repeat unit spans residues 121-140 (DVKDDLYQTSAKIPSPVDTP). Positions 121–245 (DVKDDLYQTS…EEIPSSVDPA (125 aa)) are 6 X 21 AA approximate tandem repeats. 5 tandem repeats follow at residues 141-161 (IEVL…VNTS), 162-182 (MEIL…VGST), 183-203 (VEIL…VVST), 204-224 (VEIL…VGST), and 225-245 (VEIL…VDPA).

It belongs to the gas vesicle GvpA family. In terms of assembly, interacts with GvpA.

It is found in the gas vesicle. Functionally, a minor component of the gas vesicle, might be involved in nucleating gas vesicle formation. Gas vesicles (GV) are hollow, gas filled proteinaceous nanostructures. During planktonic growth they allow positioning of the organism at a favorable depth for light or nutrient acquisition. The protein is Gas vesicle protein J of Dolichospermum flosaquae (Anabaena flos-aquae).